A 220-amino-acid chain; its full sequence is Thiamine-phosphate synthase (220 aa).

Residues 47 to 51 (QYREK) and Asn78 contribute to the 4-amino-2-methyl-5-(diphosphooxymethyl)pyrimidine site. Mg(2+) is bound by residues Asp79 and Asp98. Ser117 contributes to the 4-amino-2-methyl-5-(diphosphooxymethyl)pyrimidine binding site. Residue 143–145 (TAT) coordinates 2-[(2R,5Z)-2-carboxy-4-methylthiazol-5(2H)-ylidene]ethyl phosphate. Lys146 is a 4-amino-2-methyl-5-(diphosphooxymethyl)pyrimidine binding site. Residues Gly174 and 194–195 (IS) each bind 2-[(2R,5Z)-2-carboxy-4-methylthiazol-5(2H)-ylidene]ethyl phosphate.

The protein belongs to the thiamine-phosphate synthase family. Mg(2+) is required as a cofactor.

The catalysed reaction is 2-[(2R,5Z)-2-carboxy-4-methylthiazol-5(2H)-ylidene]ethyl phosphate + 4-amino-2-methyl-5-(diphosphooxymethyl)pyrimidine + 2 H(+) = thiamine phosphate + CO2 + diphosphate. It catalyses the reaction 2-(2-carboxy-4-methylthiazol-5-yl)ethyl phosphate + 4-amino-2-methyl-5-(diphosphooxymethyl)pyrimidine + 2 H(+) = thiamine phosphate + CO2 + diphosphate. The enzyme catalyses 4-methyl-5-(2-phosphooxyethyl)-thiazole + 4-amino-2-methyl-5-(diphosphooxymethyl)pyrimidine + H(+) = thiamine phosphate + diphosphate. It participates in cofactor biosynthesis; thiamine diphosphate biosynthesis; thiamine phosphate from 4-amino-2-methyl-5-diphosphomethylpyrimidine and 4-methyl-5-(2-phosphoethyl)-thiazole: step 1/1. Its function is as follows. Condenses 4-methyl-5-(beta-hydroxyethyl)thiazole monophosphate (THZ-P) and 2-methyl-4-amino-5-hydroxymethyl pyrimidine pyrophosphate (HMP-PP) to form thiamine monophosphate (TMP). In Methanosarcina barkeri (strain Fusaro / DSM 804), this protein is Thiamine-phosphate synthase.